The primary structure comprises 113 residues: U11-theraphotoxin-Hhn1a (113 aa).

The signal sequence occupies residues 1 to 21 (MNTVRVTFLLVFVLAVSLGQA). Residues 22–74 (DKDENRMEMQEKTEQGKGYLDFAENLLPQKLEELEAKLLEEDSEESRNSRQKR) constitute a propeptide that is removed on maturation. The span at 59-69 (LLEEDSEESRN) shows a compositional bias: basic and acidic residues. Residues 59–83 (LLEEDSEESRNSRQKRCIGEGVPCD) are disordered. 3 disulfide bridges follow: Cys-75–Cys-90, Cys-82–Cys-95, and Cys-89–Cys-110.

Belongs to the neurotoxin 14 (magi-1) family. 01 (HNTX-16) subfamily. In terms of tissue distribution, expressed by the venom gland.

Its subcellular location is the secreted. Functionally, probable ion channel inhibitor. The chain is U11-theraphotoxin-Hhn1a from Cyriopagopus hainanus (Chinese bird spider).